A 383-amino-acid polypeptide reads, in one-letter code: L-aspartate/L-glutamate decarboxylase (383 aa).

The residue at position 232 (K232) is an N6-(pyridoxal phosphate)lysine.

The protein belongs to the group II decarboxylase family. MfnA subfamily. As to quaternary structure, monomer. Pyridoxal 5'-phosphate serves as cofactor.

The catalysed reaction is L-aspartate + H(+) = beta-alanine + CO2. It catalyses the reaction L-glutamate + H(+) = 4-aminobutanoate + CO2. The enzyme catalyses L-cysteate + H(+) = taurine + CO2. It carries out the reaction 3-sulfino-L-alanine + H(+) = hypotaurine + CO2. The protein operates within cofactor biosynthesis; coenzyme A biosynthesis. Functionally, catalyzes the decarboxylation of L-aspartate to produce beta-alanine, and the decarboxylation of L-glutamate to produce 4-aminobutanoate. Can also use cysteate and, to a lesser extent, cysteine sulfite (3-sulfino-L-alanine), but not L-tyrosine. Specific activities toward L-aspartate and cysteate are higher than toward L-glutamate. The sequence is that of L-aspartate/L-glutamate decarboxylase from Pyrococcus horikoshii (strain ATCC 700860 / DSM 12428 / JCM 9974 / NBRC 100139 / OT-3).